The following is a 516-amino-acid chain: Bifunctional purine biosynthesis protein PurH (516 aa).

The region spanning 1–149 (MSERQPIRRA…KNHANVAVLT (149 aa)) is the MGS-like domain.

This sequence belongs to the PurH family.

It carries out the reaction (6R)-10-formyltetrahydrofolate + 5-amino-1-(5-phospho-beta-D-ribosyl)imidazole-4-carboxamide = 5-formamido-1-(5-phospho-D-ribosyl)imidazole-4-carboxamide + (6S)-5,6,7,8-tetrahydrofolate. The catalysed reaction is IMP + H2O = 5-formamido-1-(5-phospho-D-ribosyl)imidazole-4-carboxamide. Its pathway is purine metabolism; IMP biosynthesis via de novo pathway; 5-formamido-1-(5-phospho-D-ribosyl)imidazole-4-carboxamide from 5-amino-1-(5-phospho-D-ribosyl)imidazole-4-carboxamide (10-formyl THF route): step 1/1. It functions in the pathway purine metabolism; IMP biosynthesis via de novo pathway; IMP from 5-formamido-1-(5-phospho-D-ribosyl)imidazole-4-carboxamide: step 1/1. This is Bifunctional purine biosynthesis protein PurH from Cutibacterium acnes (strain DSM 16379 / KPA171202) (Propionibacterium acnes).